The sequence spans 331 residues: Phosphate acyltransferase (331 aa).

Belongs to the PlsX family. Homodimer. Probably interacts with PlsY.

The protein resides in the cytoplasm. It catalyses the reaction a fatty acyl-[ACP] + phosphate = an acyl phosphate + holo-[ACP]. It functions in the pathway lipid metabolism; phospholipid metabolism. In terms of biological role, catalyzes the reversible formation of acyl-phosphate (acyl-PO(4)) from acyl-[acyl-carrier-protein] (acyl-ACP). This enzyme utilizes acyl-ACP as fatty acyl donor, but not acyl-CoA. In Ureaplasma parvum serovar 3 (strain ATCC 27815 / 27 / NCTC 11736), this protein is Phosphate acyltransferase.